Here is a 433-residue protein sequence, read N- to C-terminus: Serine hydroxymethyltransferase (433 aa).

A (6S)-5,6,7,8-tetrahydrofolate-binding site is contributed by 121–123 (AHV). N6-(pyridoxal phosphate)lysine is present on K227. E243 provides a ligand contact to (6S)-5,6,7,8-tetrahydrofolate.

Belongs to the SHMT family. Homodimer. It depends on pyridoxal 5'-phosphate as a cofactor.

Its subcellular location is the cytoplasm. Its pathway is amino-acid biosynthesis; glycine biosynthesis; glycine from L-serine: step 1/1. In terms of biological role, catalyzes the reversible interconversion of serine and glycine with a modified folate serving as the one-carbon carrier. Also exhibits a pteridine-independent aldolase activity toward beta-hydroxyamino acids, producing glycine and aldehydes, via a retro-aldol mechanism. The polypeptide is Serine hydroxymethyltransferase (Saccharolobus islandicus (strain Y.G.57.14 / Yellowstone #1) (Sulfolobus islandicus)).